Here is a 398-residue protein sequence, read N- to C-terminus: 8-amino-7-oxononanoate synthase (398 aa).

Arginine 26 contacts substrate. Position 113 to 114 (113 to 114 (GF)) interacts with pyridoxal 5'-phosphate. Histidine 138 contributes to the substrate binding site. Pyridoxal 5'-phosphate-binding residues include serine 181, histidine 209, and threonine 238. N6-(pyridoxal phosphate)lysine is present on lysine 241. Residue threonine 355 participates in substrate binding.

This sequence belongs to the class-II pyridoxal-phosphate-dependent aminotransferase family. BioF subfamily. In terms of assembly, homodimer. Pyridoxal 5'-phosphate is required as a cofactor.

It catalyses the reaction 6-carboxyhexanoyl-[ACP] + L-alanine + H(+) = (8S)-8-amino-7-oxononanoate + holo-[ACP] + CO2. It functions in the pathway cofactor biosynthesis; biotin biosynthesis. Its function is as follows. Catalyzes the decarboxylative condensation of pimeloyl-[acyl-carrier protein] and L-alanine to produce 8-amino-7-oxononanoate (AON), [acyl-carrier protein], and carbon dioxide. This is 8-amino-7-oxononanoate synthase from Aeromonas hydrophila subsp. hydrophila (strain ATCC 7966 / DSM 30187 / BCRC 13018 / CCUG 14551 / JCM 1027 / KCTC 2358 / NCIMB 9240 / NCTC 8049).